We begin with the raw amino-acid sequence, 470 residues long: Uronate isomerase (470 aa).

The protein belongs to the metallo-dependent hydrolases superfamily. Uronate isomerase family.

It carries out the reaction D-glucuronate = D-fructuronate. The enzyme catalyses aldehydo-D-galacturonate = keto-D-tagaturonate. It participates in carbohydrate metabolism; pentose and glucuronate interconversion. The protein is Uronate isomerase of Shigella boydii serotype 4 (strain Sb227).